A 341-amino-acid polypeptide reads, in one-letter code: Keratin-associated protein 29-1 (341 aa).

A run of 7 repeats spans residues 5 to 9 (CCPGN), 115 to 119 (CCQEK), 120 to 124 (CCDAS), 150 to 154 (CCDAG), 240 to 244 (CCVPS), 276 to 280 (CCKPA), and 307 to 311 (CCVTG). The tract at residues 5 to 311 (CCPGNTTAIP…GCKSACCVTG (307 aa)) is 7 X 5 AA repeats of C-C-X(3).

It belongs to the KRTAP type 10 family.

The protein is Keratin-associated protein 29-1 (KRTAP29-1) of Homo sapiens (Human).